Here is a 488-residue protein sequence, read N- to C-terminus: Sucrose 6(F)-phosphate phosphorylase (488 aa).

Residues aspartate 49, histidine 87, 195–197 (RLD), glutamate 238, 295–296 (HD), 342–345 (DVHQ), and arginine 399 each bind sucrose 6(F)-phosphate. Aspartate 197 serves as the catalytic Nucleophile. Glutamate 238 acts as the Proton donor/acceptor in catalysis.

Belongs to the glycosyl hydrolase 13 family. Sucrose phosphorylase subfamily. In terms of assembly, monomer.

It carries out the reaction sucrose 6(F)-phosphate + phosphate = beta-D-fructose 6-phosphate + alpha-D-glucose 1-phosphate. In terms of biological role, catalyzes the reversible phosphorolysis of sucrose 6(F)-phosphate into alpha-D-glucose 1-phosphate (Glc1P) and D-fructose 6-phosphate. May be involved in a new pathway for the degradation of sucrose, which could become phosphorylated on its fructose moiety during uptake via a PTS system. To a lesser extent, can also reversibly act on sucrose in vitro. Is also able to catalyze transglycosylation reactions in vitro. The sequence is that of Sucrose 6(F)-phosphate phosphorylase from Thermoanaerobacterium thermosaccharolyticum (strain ATCC 7956 / DSM 571 / NCIMB 9385 / NCA 3814 / NCTC 13789 / WDCM 00135 / 2032) (Clostridium thermosaccharolyticum).